The following is a 357-amino-acid chain: Probable dual-specificity RNA methyltransferase RlmN (357 aa).

Glu95 acts as the Proton acceptor in catalysis. The region spanning 106-340 (NRDRHTVCVS…VSVREEKGTD (235 aa)) is the Radical SAM core domain. Cys113 and Cys345 are joined by a disulfide. [4Fe-4S] cluster contacts are provided by Cys120, Cys124, and Cys127. S-adenosyl-L-methionine contacts are provided by residues 172–173 (GE), Ser204, 227–229 (SLH), and Asn302. Cys345 acts as the S-methylcysteine intermediate in catalysis.

Belongs to the radical SAM superfamily. RlmN family. [4Fe-4S] cluster serves as cofactor.

It localises to the cytoplasm. It carries out the reaction adenosine(2503) in 23S rRNA + 2 reduced [2Fe-2S]-[ferredoxin] + 2 S-adenosyl-L-methionine = 2-methyladenosine(2503) in 23S rRNA + 5'-deoxyadenosine + L-methionine + 2 oxidized [2Fe-2S]-[ferredoxin] + S-adenosyl-L-homocysteine. The catalysed reaction is adenosine(37) in tRNA + 2 reduced [2Fe-2S]-[ferredoxin] + 2 S-adenosyl-L-methionine = 2-methyladenosine(37) in tRNA + 5'-deoxyadenosine + L-methionine + 2 oxidized [2Fe-2S]-[ferredoxin] + S-adenosyl-L-homocysteine. In terms of biological role, specifically methylates position 2 of adenine 2503 in 23S rRNA and position 2 of adenine 37 in tRNAs. The chain is Probable dual-specificity RNA methyltransferase RlmN from Desulfitobacterium hafniense (strain DSM 10664 / DCB-2).